The primary structure comprises 180 residues: MASSVLSSAAVATRSNVAQANMVAPFTGLKSAASFPVSRKQNLDITSIASNGGRVQCMQVWPPINKKKYETLSYLPDLSQEQLLSEVEYLLKNGWVPCLEFETEHGFVYRENNKSPGYYDGRYWTMWKLPMFGCTDATQVLAEVEEAKKAYPQAWIRIIGFDNVRQVQCISFIAYKPEGY.

A chloroplast-targeting transit peptide spans 1 to 56 (MASSVLSSAAVATRSNVAQANMVAPFTGLKSAASFPVSRKQNLDITSIASNGGRVQ).

Belongs to the RuBisCO small chain family. As to quaternary structure, heterohexadecamer of 8 large and 8 small subunits.

It localises to the plastid. The protein resides in the chloroplast. RuBisCO catalyzes two reactions: the carboxylation of D-ribulose 1,5-bisphosphate, the primary event in carbon dioxide fixation, as well as the oxidative fragmentation of the pentose substrate. Both reactions occur simultaneously and in competition at the same active site. Although the small subunit is not catalytic it is essential for maximal activity. This Nicotiana sylvestris (Wood tobacco) protein is Ribulose bisphosphate carboxylase small subunit, chloroplastic 1.